The primary structure comprises 74 residues: RNA-binding protein Hfq (74 aa).

In terms of domain architecture, Sm spans 9 to 69; sequence DQFLNQLRKE…ISTFVPQKNV (61 aa).

Belongs to the Hfq family. Homohexamer.

In terms of biological role, RNA chaperone that binds small regulatory RNA (sRNAs) and mRNAs to facilitate mRNA translational regulation in response to envelope stress, environmental stress and changes in metabolite concentrations. Also binds with high specificity to tRNAs. The protein is RNA-binding protein Hfq of Bacillus cereus (strain Q1).